The primary structure comprises 728 residues: Phomopsene synthase (728 aa).

The interval 1–327 is terpene cyclase; it reads MEYRYSYVID…PRYHSDQSLD (327 aa). Mg(2+) contacts are provided by D94 and D98. Residues D94, D98, 181 to 184, N226, 230 to 234, and 319 to 320 contribute to the substrate site; these read RIVD, SWEKE, and RY. The short motif at 94–98 is the DDXXD 1 element; that stretch reads DDLVD. The NSE/DTE motif lies at 226–234; the sequence is NDVQSWEKE. Residues 328–728 are prenyltransferase; the sequence is EMMVARMKYG…FRFLLSLLKV (401 aa). Residues 352–363 show a composition bias toward basic and acidic residues; sequence ENRGTKRTHQDD. The segment at 352–379 is disordered; the sequence is ENRGTKRTHQDDTEGVQSVKRFNGASTK. 3 repeat units span residues 381 to 386, 387 to 392, and 393 to 398. Residues 381 to 398 form a 3 X 6 AA approximate tandem repeats region; the sequence is GINGTNGINGLNGINGSN. The isopentenyl diphosphate site is built by K447, R450, and H479. 2 residues coordinate Mg(2+): D486 and D490. A DDXXD 2 motif is present at residues 486-490; the sequence is DDVQD. R495 provides a ligand contact to dimethylallyl diphosphate. R496 serves as a coordination point for isopentenyl diphosphate. Dimethylallyl diphosphate is bound by residues K574, T575, Q610, N617, K627, and K637.

The protein in the N-terminal section; belongs to the terpene synthase family. It in the C-terminal section; belongs to the FPP/GGPP synthase family. Hexamer. Mg(2+) serves as cofactor.

The enzyme catalyses isopentenyl diphosphate + (2E,6E)-farnesyl diphosphate = (2E,6E,10E)-geranylgeranyl diphosphate + diphosphate. It functions in the pathway secondary metabolite biosynthesis; terpenoid biosynthesis. In terms of biological role, bifunctional terpene synthase; part of the gene cluster that mediates the biosynthesis of the diterpene methyl phomopsenonate. At first, the universal precursor of diterpene, geranylgeranyl diphosphate (GGPP) is provided and is cyclized by the unusual bifunctional terpene synthase PaPS to give phomopsene. The C-terminal prenyltransferase domain of PaPS catalyzes formation of GGPP, whereas the N-terminal terpene cyclase domain catalyzes the cyclization of GGPP to phomopsene. Since the oxidation of a methylgroup to a carboxyl group is frequently catalyzed by a cytochrome P450 monooxygenase, the C-16 methyl group would be oxidized by the cluster-specific cytochrome P450 monooxygenase ORF3. Subsequently, oxidation of the allylic position and methylation of the carboxyl group may give methyl phomopsenonate. Although further study is necessary to identify genes such as a monooxygenase and a methyltransferase, the predicted functions of genes on the cluster are correlated with the structure of methyl phomopsenonate. This is Phomopsene synthase from Phomopsis amygdali (Fusicoccum amygdali).